Here is a 366-residue protein sequence, read N- to C-terminus: Alanine racemase (366 aa).

The Proton acceptor; specific for D-alanine role is filled by K40. K40 carries the N6-(pyridoxal phosphate)lysine modification. Residue R136 coordinates substrate. The Proton acceptor; specific for L-alanine role is filled by Y263. M310 is a binding site for substrate.

Belongs to the alanine racemase family. Pyridoxal 5'-phosphate serves as cofactor.

It catalyses the reaction L-alanine = D-alanine. The protein operates within amino-acid biosynthesis; D-alanine biosynthesis; D-alanine from L-alanine: step 1/1. Functionally, catalyzes the interconversion of L-alanine and D-alanine. May also act on other amino acids. The protein is Alanine racemase (alr) of Streptococcus pyogenes serotype M2 (strain MGAS10270).